Reading from the N-terminus, the 178-residue chain is Probable major fimbrial subunit LpfA (178 aa).

A signal peptide spans 1–24 (MEFFMKKVVFALTALALTSGTVFA).

Belongs to the fimbrial protein family.

Its subcellular location is the fimbrium. In terms of biological role, part of the lpfABCC'DE fimbrial operon. LP fimbriae may participate in the interaction with eukaryotic cells by assisting in microcolony formation. The sequence is that of Probable major fimbrial subunit LpfA (lpfA) from Escherichia coli O157:H7.